A 288-amino-acid polypeptide reads, in one-letter code: UTP--glucose-1-phosphate uridylyltransferase (288 aa).

This sequence belongs to the UDPGP type 2 family.

The enzyme catalyses alpha-D-glucose 1-phosphate + UTP + H(+) = UDP-alpha-D-glucose + diphosphate. It participates in glycolipid metabolism; diglucosyl-diacylglycerol biosynthesis. Catalyzes the formation of UDP-glucose from glucose-1-phosphate and UTP. This is an intermediate step in the biosynthesis of diglucosyl-diacylglycerol (Glc2-DAG), i.e. the predominant glycolipid found in the S.aureus membrane, which is also used as a membrane anchor for lipoteichoic acid (LTA). This is UTP--glucose-1-phosphate uridylyltransferase (gtaB) from Staphylococcus aureus (strain MRSA252).